Here is a 255-residue protein sequence, read N- to C-terminus: Pyridoxine 5'-phosphate synthase (255 aa).

Asn8 and Arg19 together coordinate 3-amino-2-oxopropyl phosphate. His44 functions as the Proton acceptor in the catalytic mechanism. Residues Arg46 and His51 each contribute to the 1-deoxy-D-xylulose 5-phosphate site. Glu74 acts as the Proton acceptor in catalysis. 1-deoxy-D-xylulose 5-phosphate is bound at residue Thr111. Residue His202 is the Proton donor of the active site. Residues Asp203 and 225-226 each bind 3-amino-2-oxopropyl phosphate; that span reads GH.

The protein belongs to the PNP synthase family. As to quaternary structure, homooctamer; tetramer of dimers.

It is found in the cytoplasm. The enzyme catalyses 3-amino-2-oxopropyl phosphate + 1-deoxy-D-xylulose 5-phosphate = pyridoxine 5'-phosphate + phosphate + 2 H2O + H(+). Its pathway is cofactor biosynthesis; pyridoxine 5'-phosphate biosynthesis; pyridoxine 5'-phosphate from D-erythrose 4-phosphate: step 5/5. Catalyzes the complicated ring closure reaction between the two acyclic compounds 1-deoxy-D-xylulose-5-phosphate (DXP) and 3-amino-2-oxopropyl phosphate (1-amino-acetone-3-phosphate or AAP) to form pyridoxine 5'-phosphate (PNP) and inorganic phosphate. This chain is Pyridoxine 5'-phosphate synthase, found in Xanthomonas axonopodis pv. citri (strain 306).